A 297-amino-acid polypeptide reads, in one-letter code: Acetyl-coenzyme A carboxylase carboxyl transferase subunit beta (297 aa).

One can recognise a CoA carboxyltransferase N-terminal domain in the interval 27–296 (LWHKCPSCEA…PEQAREAAAV (270 aa)). Zn(2+) contacts are provided by C31, C34, C50, and C53. Residues 31–53 (CPSCEAVLYRPELEKTLDVCPKC) form a C4-type zinc finger.

This sequence belongs to the AccD/PCCB family. In terms of assembly, acetyl-CoA carboxylase is a heterohexamer composed of biotin carboxyl carrier protein (AccB), biotin carboxylase (AccC) and two subunits each of ACCase subunit alpha (AccA) and ACCase subunit beta (AccD). It depends on Zn(2+) as a cofactor.

It is found in the cytoplasm. It catalyses the reaction N(6)-carboxybiotinyl-L-lysyl-[protein] + acetyl-CoA = N(6)-biotinyl-L-lysyl-[protein] + malonyl-CoA. The protein operates within lipid metabolism; malonyl-CoA biosynthesis; malonyl-CoA from acetyl-CoA: step 1/1. Component of the acetyl coenzyme A carboxylase (ACC) complex. Biotin carboxylase (BC) catalyzes the carboxylation of biotin on its carrier protein (BCCP) and then the CO(2) group is transferred by the transcarboxylase to acetyl-CoA to form malonyl-CoA. The protein is Acetyl-coenzyme A carboxylase carboxyl transferase subunit beta of Pseudomonas putida (strain GB-1).